The following is a 295-amino-acid chain: 33 kDa chaperonin (295 aa).

2 cysteine pairs are disulfide-bonded: Cys238–Cys240 and Cys271–Cys274.

The protein belongs to the HSP33 family. Post-translationally, under oxidizing conditions two disulfide bonds are formed involving the reactive cysteines. Under reducing conditions zinc is bound to the reactive cysteines and the protein is inactive.

It is found in the cytoplasm. Redox regulated molecular chaperone. Protects both thermally unfolding and oxidatively damaged proteins from irreversible aggregation. Plays an important role in the bacterial defense system toward oxidative stress. This is 33 kDa chaperonin from Levilactobacillus brevis (strain ATCC 367 / BCRC 12310 / CIP 105137 / JCM 1170 / LMG 11437 / NCIMB 947 / NCTC 947) (Lactobacillus brevis).